Reading from the N-terminus, the 339-residue chain is Heat-inducible transcription repressor HrcA (339 aa).

Belongs to the HrcA family.

Functionally, negative regulator of class I heat shock genes (grpE-dnaK-dnaJ and groELS operons). Prevents heat-shock induction of these operons. The chain is Heat-inducible transcription repressor HrcA from Acidothermus cellulolyticus (strain ATCC 43068 / DSM 8971 / 11B).